We begin with the raw amino-acid sequence, 775 residues long: Meiotic driver SPOK2 (775 aa).

Positions 4-69 form a coiled coil; that stretch reads KDRIAQLLRE…RCERERLQLE (66 aa). Disordered regions lie at residues 18–51, 211–249, 442–525, and 734–761; these read KAREEEAKARAEEAKARAEEAKARAEEAKAREEE, QKDDGSSGADDNTSDGSLERRQQAGPNKRPTSKRKYICS, LSSA…AMAD, and PPPKPRAVSRLSKPKRKRGDSEADAQLF. The segment covering 444–457 has biased composition (polar residues); it reads SAPSSQNTDISEYT.

It localises to the cytoplasm. The protein resides in the nucleus. Functionally, promotes unequal transmission of alleles from the parental zygote to progeny spores by acting as poison/antidote system, leading to poisoning of progeny that do not inherit the allele. May possess DNA nuclease activity that leads to spore killing, and a kinase activity that confers resistance to the nuclease activity. This chain is Meiotic driver SPOK2, found in Podospora anserina (strain S / ATCC MYA-4624 / DSM 980 / FGSC 10383) (Pleurage anserina).